Consider the following 153-residue polypeptide: Riboflavin synthase (153 aa).

It belongs to the DMRL synthase family.

The enzyme catalyses 2 6,7-dimethyl-8-(1-D-ribityl)lumazine + H(+) = 5-amino-6-(D-ribitylamino)uracil + riboflavin. It participates in cofactor biosynthesis; riboflavin biosynthesis; riboflavin from 2-hydroxy-3-oxobutyl phosphate and 5-amino-6-(D-ribitylamino)uracil: step 2/2. The protein is Riboflavin synthase (ribC) of Archaeoglobus fulgidus (strain ATCC 49558 / DSM 4304 / JCM 9628 / NBRC 100126 / VC-16).